Here is a 638-residue protein sequence, read N- to C-terminus: uncharacterized protein (638 aa).

The signal sequence occupies residues 1-31 (MKFIKFNDSTIDSFLFMMLTDLAKTLTKSEA). Basic and acidic residues-rich tracts occupy residues 247-256 (EEKKAPKLSD), 273-284 (EEMPTWHRETEA), 301-310 (DLGKDASREG), and 329-342 (RKDYSKLEALESQK). 2 disordered regions span residues 247-285 (EEKKAPKLSDDITLPKQSDGDEDIHEEEMPTWHRETEAP) and 301-354 (DLGK…ADGK). The VWFA domain occupies 445-632 (FTLLVDCSAS…DVLYPLLKKL (188 aa)).

This is an uncharacterized protein from Bacillus subtilis (strain 168).